Here is a 212-residue protein sequence, read N- to C-terminus: Ras-related protein Rab-15 (212 aa).

GTP is bound by residues Ser17, Gly18, Val19, Gly20, Lys21, Thr22, Cys23, Ser35, Ser39, and Thr40. Residue Thr22 participates in Mg(2+) binding. 2 short sequence motifs (switch) span residues 31-45 (NEFH…GVDF) and 63-80 (DTAG…YYRR). Positions 40 and 63 each coordinate Mg(2+). GTP is bound by residues Gly66, Asn121, Lys122, Asp124, Ser151, and Ala152. The tract at residues 192-212 (ELEEDEGKPEGPANSSKTCWC) is disordered. S-geranylgeranyl cysteine attachment occurs at residues Cys210 and Cys212. Cys212 bears the Cysteine methyl ester mark.

This sequence belongs to the small GTPase superfamily. Rab family. In terms of assembly, the GTP bound form of RAB15 interacts with REP15. Interacts (GTP-bound form) with MICAL1, MICAL3, MICALCL, EHBP1 and EHBP1L1. The cofactor is Mg(2+).

Its subcellular location is the cell membrane. The enzyme catalyses GTP + H2O = GDP + phosphate + H(+). Its activity is regulated as follows. Regulated by guanine nucleotide exchange factors (GEFs) which promote the exchange of bound GDP for free GTP. Regulated by GTPase activating proteins (GAPs) which increase the GTP hydrolysis activity. Inhibited by GDP dissociation inhibitors (GDIs). Its function is as follows. The small GTPases Rab are key regulators of intracellular membrane trafficking, from the formation of transport vesicles to their fusion with membranes. Rabs cycle between an inactive GDP-bound form and an active GTP-bound form that is able to recruit to membranes different sets of downstream effectors directly responsible for vesicle formation, movement, tethering and fusion. RAB15 may act in concert with RAB3A in regulating aspects of synaptic vesicle membrane flow within the nerve terminal. The protein is Ras-related protein Rab-15 (RAB15) of Bos taurus (Bovine).